Reading from the N-terminus, the 188-residue chain is Hypoxanthine/guanine phosphoribosyltransferase (188 aa).

This sequence belongs to the purine/pyrimidine phosphoribosyltransferase family. Archaeal HPRT subfamily. In terms of assembly, homodimer.

Its subcellular location is the cytoplasm. It carries out the reaction IMP + diphosphate = hypoxanthine + 5-phospho-alpha-D-ribose 1-diphosphate. It catalyses the reaction GMP + diphosphate = guanine + 5-phospho-alpha-D-ribose 1-diphosphate. It functions in the pathway purine metabolism; IMP biosynthesis via salvage pathway; IMP from hypoxanthine: step 1/1. Its function is as follows. Catalyzes a salvage reaction resulting in the formation of IMP that is energically less costly than de novo synthesis. This is Hypoxanthine/guanine phosphoribosyltransferase from Methanobrevibacter ruminantium (strain ATCC 35063 / DSM 1093 / JCM 13430 / OCM 146 / M1) (Methanobacterium ruminantium).